A 279-amino-acid chain; its full sequence is Bifunctional protein FolD (279 aa).

NADP(+)-binding positions include glycine 159–serine 161, serine 184, and threonine 225.

The protein belongs to the tetrahydrofolate dehydrogenase/cyclohydrolase family. As to quaternary structure, homodimer.

The catalysed reaction is (6R)-5,10-methylene-5,6,7,8-tetrahydrofolate + NADP(+) = (6R)-5,10-methenyltetrahydrofolate + NADPH. It carries out the reaction (6R)-5,10-methenyltetrahydrofolate + H2O = (6R)-10-formyltetrahydrofolate + H(+). It participates in one-carbon metabolism; tetrahydrofolate interconversion. Functionally, catalyzes the oxidation of 5,10-methylenetetrahydrofolate to 5,10-methenyltetrahydrofolate and then the hydrolysis of 5,10-methenyltetrahydrofolate to 10-formyltetrahydrofolate. This Methanospirillum hungatei JF-1 (strain ATCC 27890 / DSM 864 / NBRC 100397 / JF-1) protein is Bifunctional protein FolD.